The chain runs to 419 residues: MDKFRVQGPGRLSGEVTISGAKNAALPILFAALLAEEPVEIQNVPKLKDIDTTMKLLSQLGTKVERNGSVWIDASQVNIFCAPYELVKTMRASIWALGPLVARFGQGQVSLPGGCAIGARPVDLHITGLEQLGAEIKLEEGYVKASVQGRLKGAHIVMDKVSVGATVTIMSAATLAEGTTVIENAAREPEIVDTANFLNTLGAKITGQGTDKITIEGVERLGGGVYRVLPDRIETGTFLVAAAISGGKVMCRNTRPDTLDAVLAKLREAGADIETGEDWISLDMHGKRPKAVNVRTAPHPAFPTDMQAQFTLLNLVAEGTGVITETIFENRFMHVPELIRMGAHAEIESNTVICHGVEKLSGAQVMATDLRASASLVLAGCIAEGTTVVDRIYHIDRGYEGIEDKLRALGANIERIKGE.

Residue 22–23 (KN) coordinates phosphoenolpyruvate. Arg-91 is a binding site for UDP-N-acetyl-alpha-D-glucosamine. Cys-115 functions as the Proton donor in the catalytic mechanism. Cys-115 carries the 2-(S-cysteinyl)pyruvic acid O-phosphothioketal modification. UDP-N-acetyl-alpha-D-glucosamine contacts are provided by residues 120-124 (RPVDL), 160-163 (KVSV), Asp-305, and Ile-327.

This sequence belongs to the EPSP synthase family. MurA subfamily.

Its subcellular location is the cytoplasm. It carries out the reaction phosphoenolpyruvate + UDP-N-acetyl-alpha-D-glucosamine = UDP-N-acetyl-3-O-(1-carboxyvinyl)-alpha-D-glucosamine + phosphate. It participates in cell wall biogenesis; peptidoglycan biosynthesis. Cell wall formation. Adds enolpyruvyl to UDP-N-acetylglucosamine. In Cronobacter sakazakii (strain ATCC BAA-894) (Enterobacter sakazakii), this protein is UDP-N-acetylglucosamine 1-carboxyvinyltransferase.